The following is a 330-amino-acid chain: Cyclin N-terminal domain-containing protein 1 (330 aa).

Positions Asp27–Asn178 constitute a Cyclin N-terminal domain.

Interacts with PRR19; this interaction promotes crossover formation. Interacts with RFC3 and RFC4; these interactions facilitate crossover formation. Interacts with CDC34; this interaction regulates the cell-cycle progression.

The protein resides in the nucleus. It is found in the cytoplasm. The protein localises to the chromosome. Its function is as follows. Plays a role in the different steps of crossover formation during meiotic recombination. Participates in the crossover differentiation step of crossover-specific recombination intermediates through its interaction with PRR19. In addition, stimulates crossover formation through the interactions with RFC3 and RFC4 and simultaneously regulates cell-cycle progression through interactions with CDC34 and subsequent ubiquitination of WEE1. May also participates in an active deselection process that destabilizes or removes excess pre-CO intermediates. The protein is Cyclin N-terminal domain-containing protein 1 of Homo sapiens (Human).